A 343-amino-acid polypeptide reads, in one-letter code: Biotin synthase (343 aa).

One can recognise a Radical SAM core domain in the interval 36 to 254 (RQVQVSTLLS…IAVARIMMPR (219 aa)). [4Fe-4S] cluster is bound by residues Cys51, Cys55, and Cys58. [2Fe-2S] cluster contacts are provided by Cys95, Cys126, Cys186, and Arg258.

The protein belongs to the radical SAM superfamily. Biotin synthase family. Homodimer. It depends on [4Fe-4S] cluster as a cofactor. [2Fe-2S] cluster serves as cofactor.

The enzyme catalyses (4R,5S)-dethiobiotin + (sulfur carrier)-SH + 2 reduced [2Fe-2S]-[ferredoxin] + 2 S-adenosyl-L-methionine = (sulfur carrier)-H + biotin + 2 5'-deoxyadenosine + 2 L-methionine + 2 oxidized [2Fe-2S]-[ferredoxin]. Its pathway is cofactor biosynthesis; biotin biosynthesis; biotin from 7,8-diaminononanoate: step 2/2. In terms of biological role, catalyzes the conversion of dethiobiotin (DTB) to biotin by the insertion of a sulfur atom into dethiobiotin via a radical-based mechanism. In Erwinia tasmaniensis (strain DSM 17950 / CFBP 7177 / CIP 109463 / NCPPB 4357 / Et1/99), this protein is Biotin synthase.